We begin with the raw amino-acid sequence, 119 residues long: UPF0231 protein YPTB0717 (119 aa).

The protein belongs to the UPF0231 family.

This is UPF0231 protein YPTB0717 from Yersinia pseudotuberculosis serotype I (strain IP32953).